The primary structure comprises 180 residues: MTARLQEFYKEQVVPALMKQFGYKSVMEVPRFTKITLNMGLGEAINDKKVIELAVGDLTKIAGQKPVVTKAKKAIAGFKIRQGYPIGAMVTLRGERMFEFLDRFVTVALPRVRDFRGVSGKSFDGRGNYNIGVKEQIIFPEIEYDKIDALRGLNISITTTAKNDEEAKALLNAFKFPFRN.

Belongs to the universal ribosomal protein uL5 family. In terms of assembly, part of the 50S ribosomal subunit; part of the 5S rRNA/L5/L18/L25 subcomplex. Contacts the 5S rRNA and the P site tRNA. Forms a bridge to the 30S subunit in the 70S ribosome.

Functionally, this is one of the proteins that bind and probably mediate the attachment of the 5S RNA into the large ribosomal subunit, where it forms part of the central protuberance. In the 70S ribosome it contacts protein S13 of the 30S subunit (bridge B1b), connecting the 2 subunits; this bridge is implicated in subunit movement. Contacts the P site tRNA; the 5S rRNA and some of its associated proteins might help stabilize positioning of ribosome-bound tRNAs. In Cupriavidus metallidurans (strain ATCC 43123 / DSM 2839 / NBRC 102507 / CH34) (Ralstonia metallidurans), this protein is Large ribosomal subunit protein uL5.